The primary structure comprises 137 residues: Large ribosomal subunit protein uL16 (137 aa).

This sequence belongs to the universal ribosomal protein uL16 family. Part of the 50S ribosomal subunit.

Functionally, binds 23S rRNA and is also seen to make contacts with the A and possibly P site tRNAs. This chain is Large ribosomal subunit protein uL16, found in Lactococcus lactis subsp. cremoris (strain SK11).